A 168-amino-acid chain; its full sequence is RxLR effector protein PITG_12737 (168 aa).

Residues Met1–Ala20 form the signal peptide. The RxLR-dEER motif lies at Arg54 to Arg77.

It belongs to the RxLR effector family.

The protein resides in the secreted. The protein localises to the host nucleus. It is found in the host cytoplasm. Effector that enhances P.infestans colonization of Nicotiana benthamiana leaves. This chain is RxLR effector protein PITG_12737, found in Phytophthora infestans (strain T30-4) (Potato late blight agent).